Here is a 1229-residue protein sequence, read N- to C-terminus: Membrane-anchored lipid-binding protein SIP3 (1229 aa).

Residues 1-1066 (MSVHGRDPKK…AEKFSRINRM (1066 aa)) are Cytoplasmic-facing. Residues 309-423 (SPEKSGWLYM…WLIAFEATKK (115 aa)) form the PH domain. The region spanning 771–976 (EYSITYNHEY…VLRYYLEKIG (206 aa)) is the VASt domain. The chain crosses the membrane as a helical span at residues 1067–1087 (MVVGLLASIMINILLSEKASV). Residues 1088–1229 (PYWSIKRAEK…ELEKLRPPIT (142 aa)) are Lumenal-facing. An N-linked (GlcNAc...) asparagine glycan is attached at N1206.

The protein belongs to the SIP3 family. As to quaternary structure, interacts with SNF1.

It is found in the endoplasmic reticulum membrane. Its function is as follows. May be involved in sterol transfer between intracellular membranes. The sequence is that of Membrane-anchored lipid-binding protein SIP3 from Saccharomyces cerevisiae (strain ATCC 204508 / S288c) (Baker's yeast).